We begin with the raw amino-acid sequence, 342 residues long: Cell cycle control protein 50C (342 aa).

At 1 to 33 the chain is on the cytoplasmic side; that stretch reads MEMMPQYDLSRLPENTALKQQTLPTQQLNLSAS. A helical transmembrane segment spans residues 34 to 54; it reads VVLSIFFITGGFCLSIGIILL. The Extracellular portion of the chain corresponds to 55-306; sequence LSAKSTKKIE…STLTWIGGGG (252 aa). 4 N-linked (GlcNAc...) asparagine glycosylation sites follow: N66, N80, N89, and N205. Residues 307–327 traverse the membrane as a helical segment; it reads LFLGLTYTVTGALTLLASFAI. Residues 328 to 342 lie on the Cytoplasmic side of the membrane; that stretch reads LTIHLMLKRSKLNFL.

The protein belongs to the CDC50/LEM3 family. In terms of tissue distribution, specifically expressed in testis.

Its subcellular location is the membrane. This is Cell cycle control protein 50C (Tmem30c) from Mus musculus (Mouse).